Reading from the N-terminus, the 325-residue chain is Beta-ketoacyl-[acyl-carrier-protein] synthase III (325 aa).

Residues cysteine 119 and histidine 252 contribute to the active site. Residues 253–257 are ACP-binding; the sequence is QANIR. The active site involves asparagine 282.

This sequence belongs to the thiolase-like superfamily. FabH family. In terms of assembly, homodimer.

It localises to the cytoplasm. It carries out the reaction malonyl-[ACP] + acetyl-CoA + H(+) = 3-oxobutanoyl-[ACP] + CO2 + CoA. Its pathway is lipid metabolism; fatty acid biosynthesis. Functionally, catalyzes the condensation reaction of fatty acid synthesis by the addition to an acyl acceptor of two carbons from malonyl-ACP. Catalyzes the first condensation reaction which initiates fatty acid synthesis and may therefore play a role in governing the total rate of fatty acid production. Possesses both acetoacetyl-ACP synthase and acetyl transacylase activities. Its substrate specificity determines the biosynthesis of branched-chain and/or straight-chain of fatty acids. The chain is Beta-ketoacyl-[acyl-carrier-protein] synthase III from Verminephrobacter eiseniae (strain EF01-2).